We begin with the raw amino-acid sequence, 259 residues long: Adenylate kinase (259 aa).

52–57 (GAGKGT) contacts ATP. Positions 72 to 101 (ATGDMLRSQVAKKTDLGREAKKIMDQGGLV) are NMP. AMP-binding positions include Thr73, Arg78, 99–101 (GLV), 128–131 (GFPR), and Gln135. An LID region spans residues 169 to 206 (GRLVHPASGRSYHKIFNPPKEAMKDDITGEPLVQRSDD). Residues Arg170 and 179–180 (SY) contribute to the ATP site. AMP is bound by residues Arg203 and Arg214. Gln242 lines the ATP pocket.

Belongs to the adenylate kinase family. AK2 subfamily. Monomer.

It is found in the cytoplasm. It localises to the mitochondrion intermembrane space. It carries out the reaction AMP + ATP = 2 ADP. Catalyzes the reversible transfer of the terminal phosphate group between ATP and AMP. Plays an important role in cellular energy homeostasis and in adenine nucleotide metabolism. Adenylate kinase activity is critical for regulation of the phosphate utilization and the AMP de novo biosynthesis pathways. The protein is Adenylate kinase (adk1) of Emericella nidulans (strain FGSC A4 / ATCC 38163 / CBS 112.46 / NRRL 194 / M139) (Aspergillus nidulans).